The primary structure comprises 556 residues: Oxygen-dependent choline dehydrogenase (556 aa).

Position 4–33 (4–33) interacts with FAD; it reads DYIIIGAGSAGNVLATRLTEDPNTTVLLLE. His473 functions as the Proton acceptor in the catalytic mechanism.

The protein belongs to the GMC oxidoreductase family. FAD serves as cofactor.

Its subcellular location is the cell membrane. It catalyses the reaction choline + A = betaine aldehyde + AH2. It carries out the reaction betaine aldehyde + NAD(+) + H2O = glycine betaine + NADH + 2 H(+). It functions in the pathway amine and polyamine biosynthesis; betaine biosynthesis via choline pathway; betaine aldehyde from choline (cytochrome c reductase route): step 1/1. In terms of biological role, involved in the biosynthesis of the osmoprotectant glycine betaine. Catalyzes the oxidation of choline to betaine aldehyde and betaine aldehyde to glycine betaine at the same rate. The polypeptide is Oxygen-dependent choline dehydrogenase (Escherichia coli O6:H1 (strain CFT073 / ATCC 700928 / UPEC)).